The chain runs to 102 residues: Small ribosomal subunit protein uS10 (102 aa).

This sequence belongs to the universal ribosomal protein uS10 family. As to quaternary structure, part of the 30S ribosomal subunit.

Functionally, involved in the binding of tRNA to the ribosomes. This chain is Small ribosomal subunit protein uS10, found in Bacillus thuringiensis (strain Al Hakam).